The primary structure comprises 299 residues: Protease HtpX homolog (299 aa).

2 helical membrane-spanning segments follow: residues 15–35 (MFLT…VLWQ) and 37–57 (GVSY…QYYF). His-140 lines the Zn(2+) pocket. The active site involves Glu-141. His-144 contacts Zn(2+). A run of 2 helical transmembrane segments spans residues 158–178 (FFAT…GAFG) and 187–207 (NNIM…YFLI). Zn(2+) is bound at residue Glu-215.

Belongs to the peptidase M48B family. Requires Zn(2+) as cofactor.

It localises to the cell membrane. This Moorella thermoacetica (strain ATCC 39073 / JCM 9320) protein is Protease HtpX homolog.